We begin with the raw amino-acid sequence, 178 residues long: Ribosome maturation factor RimM (178 aa).

A PRC barrel domain is found at 101 to 178 (ADEYYWYQLV…VMRVEWDADF (78 aa)).

The protein belongs to the RimM family. In terms of assembly, binds ribosomal protein uS19.

The protein resides in the cytoplasm. Its function is as follows. An accessory protein needed during the final step in the assembly of 30S ribosomal subunit, possibly for assembly of the head region. Essential for efficient processing of 16S rRNA. May be needed both before and after RbfA during the maturation of 16S rRNA. It has affinity for free ribosomal 30S subunits but not for 70S ribosomes. This chain is Ribosome maturation factor RimM, found in Pseudomonas putida (strain GB-1).